Reading from the N-terminus, the 240-residue chain is Tetrahydromethanopterin S-methyltransferase subunit A (240 aa).

Over 1 to 216 (MADKKAPASG…DAALIAKFNS (216 aa)) the chain is Cytoplasmic. H85 is a 5-hydroxybenzimidazolylcob(I)amide binding site. The helical transmembrane segment at 217–234 (GYYNGKIQGIAIGLFLSL) threads the bilayer. Residues 235 to 240 (LIFSLL) are Extracellular-facing.

It belongs to the MtrA family. As to quaternary structure, the complex is composed of 8 subunits; MtrA, MtrB, MtrC, MtrD, MtrE, MtrF, MtrG and MtrH. The cofactor is 5-hydroxybenzimidazolylcob(I)amide.

The protein localises to the cell membrane. It carries out the reaction 5-methyl-5,6,7,8-tetrahydromethanopterin + coenzyme M + 2 Na(+)(in) = 5,6,7,8-tetrahydromethanopterin + methyl-coenzyme M + 2 Na(+)(out). The protein operates within one-carbon metabolism; methanogenesis from CO(2); methyl-coenzyme M from 5,10-methylene-5,6,7,8-tetrahydromethanopterin: step 2/2. In terms of biological role, part of a complex that catalyzes the formation of methyl-coenzyme M and tetrahydromethanopterin from coenzyme M and methyl-tetrahydromethanopterin. This is an energy-conserving, sodium-ion translocating step. This is Tetrahydromethanopterin S-methyltransferase subunit A from Methanococcus aeolicus (strain ATCC BAA-1280 / DSM 17508 / OCM 812 / Nankai-3).